The following is a 413-amino-acid chain: MAMNFVTFNQDYSYLAVATAKGFRIFTTDPFAKSYETKEGNIAIIEMLFSTSLVALILSPRRLQITNTKRQSTICELTFPTTVLAVKLNRKRLVIVLEDQIYLYDIQTMKLLYTIETSPNPSAICALSPSSDNCYLAYPLPHKAPPTSFTPPSHAPPGNTHISPTSGEVLIFDTLKLEAINVIEAHRSPLACITLNSDGTLIATASDKGTIIRVFSVPDGHKLYQFRRGSIPSRIYSMSFNTTSTLLCVSSSTETIHLFKLSQGQSSESSLPSPSAPQRSMSQSSLSNSPDEDETSGDKDSSEFHSRKHNGTLMGMLRRTSQTVGSSFAAKVGGYLPKGVSEMWEPARDFAWIKLPKSNPGPGGNGNTGPLRSVVAMSNNTPQVMVVTSDGNFYVFSIDLSKGGEGTLTKQYS.

WD repeat units lie at residues 1–36, 69–114, 141–182, 185–225, and 230–269; these read MAMN…KSYE, KRQS…LLYT, PHKA…AINV, AHRS…KLYQ, and SIPS…SSES. The short motif at 226–230 is the L/FRRG motif element; sequence FRRGS. Residues 263-289 are compositionally biased toward low complexity; it reads QGQSSESSLPSPSAPQRSMSQSSLSNS. Residues 263–315 are disordered; the sequence is QGQSSESSLPSPSAPQRSMSQSSLSNSPDEDETSGDKDSSEFHSRKHNGTLMG. Basic and acidic residues predominate over residues 296–305; it reads SGDKDSSEFH. 2 WD repeats span residues 308 to 354 and 366 to 406; these read KHNG…AWIK and GNTG…GGEG.

It belongs to the WD repeat PROPPIN family. Component of the PI(3,5)P2 regulatory complex.

The protein localises to the preautophagosomal structure membrane. The protein resides in the vacuole membrane. It localises to the endosome membrane. The PI(3,5)P2 regulatory complex regulates both the synthesis and turnover of phosphatidylinositol 3,5-bisphosphate (PtdIns(3,5)P2). Necessary for proper vacuole morphology. Plays an important role in osmotically-induced vacuole fragmentation. Required for cytoplasm to vacuole transport (Cvt) vesicle formation, pexophagy and starvation-induced autophagy. Involved in correct atg9 trafficking to the pre-autophagosomal structure. Might also be involved in premeiotic DNA replication. The sequence is that of Autophagy-related protein 18 (atg18) from Aspergillus oryzae (strain ATCC 42149 / RIB 40) (Yellow koji mold).